Consider the following 74-residue polypeptide: Putative sulfur carrier protein NMA0882 (74 aa).

C13 functions as the Cysteine persulfide intermediate in the catalytic mechanism.

It belongs to the sulfur carrier protein TusA family.

The chain is Putative sulfur carrier protein NMA0882 from Neisseria meningitidis serogroup A / serotype 4A (strain DSM 15465 / Z2491).